Consider the following 320-residue polypeptide: o-succinylbenzoate synthase (320 aa).

The Proton donor role is filled by Lys133. Mg(2+) is bound by residues Asp161, Glu190, and Asp213. Lys235 functions as the Proton acceptor in the catalytic mechanism.

The protein belongs to the mandelate racemase/muconate lactonizing enzyme family. MenC type 1 subfamily. The cofactor is a divalent metal cation.

It carries out the reaction (1R,6R)-6-hydroxy-2-succinyl-cyclohexa-2,4-diene-1-carboxylate = 2-succinylbenzoate + H2O. It functions in the pathway quinol/quinone metabolism; 1,4-dihydroxy-2-naphthoate biosynthesis; 1,4-dihydroxy-2-naphthoate from chorismate: step 4/7. It participates in quinol/quinone metabolism; menaquinone biosynthesis. Converts 2-succinyl-6-hydroxy-2,4-cyclohexadiene-1-carboxylate (SHCHC) to 2-succinylbenzoate (OSB). The polypeptide is o-succinylbenzoate synthase (Escherichia coli O157:H7).